We begin with the raw amino-acid sequence, 92 residues long: Small ribosomal subunit protein bS6 (92 aa).

The protein belongs to the bacterial ribosomal protein bS6 family.

In terms of biological role, binds together with bS18 to 16S ribosomal RNA. The polypeptide is Small ribosomal subunit protein bS6 (Clostridioides difficile (strain 630) (Peptoclostridium difficile)).